The sequence spans 385 residues: tRNA-specific 2-thiouridylase MnmA (385 aa).

ATP is bound by residues 27–34 (AMSGGVDS) and Leu-53. The active-site Nucleophile is Cys-121. Cysteines 121 and 217 form a disulfide. An ATP-binding site is contributed by Gly-145. The tract at residues 167-169 (KDQ) is interaction with tRNA. Cys-217 (cysteine persulfide intermediate) is an active-site residue.

It belongs to the MnmA/TRMU family.

It localises to the cytoplasm. It catalyses the reaction S-sulfanyl-L-cysteinyl-[protein] + uridine(34) in tRNA + AH2 + ATP = 2-thiouridine(34) in tRNA + L-cysteinyl-[protein] + A + AMP + diphosphate + H(+). In terms of biological role, catalyzes the 2-thiolation of uridine at the wobble position (U34) of tRNA, leading to the formation of s(2)U34. The chain is tRNA-specific 2-thiouridylase MnmA from Sorangium cellulosum (strain So ce56) (Polyangium cellulosum (strain So ce56)).